A 420-amino-acid chain; its full sequence is Membrane protein UL43 homolog (420 aa).

11 helical membrane passes run 58–78, 81–101, 114–134, 157–177, 181–201, 203–223, 278–298, 312–332, 343–363, 364–384, and 399–419; these read IFSI…IQFI, KIIY…AFIV, IGKP…TLIT, LMCF…CLAT, LTWK…ISAP, GNIS…INVV, QIPM…VIAL, TDML…IFIP, IIIL…FGLV, LGPT…CINI, and VVKS…LVAL.

The protein belongs to the alphaherpesvirinae HHV-1 UL43 family.

The protein resides in the host membrane. This Gallus gallus (Chicken) protein is Membrane protein UL43 homolog (MDV056).